We begin with the raw amino-acid sequence, 434 residues long: NADH-quinone oxidoreductase subunit F 1 (434 aa).

54–63 (GRGGAGFPTG) provides a ligand contact to NAD(+). An FMN-binding site is contributed by 166–213 (GAGAYICGEETALLESLEGKKGQPRLKPPFPANMGLYGCPTTVNNVES). Positions 345, 348, 351, and 391 each coordinate [4Fe-4S] cluster.

Belongs to the complex I 51 kDa subunit family. FMN is required as a cofactor. [4Fe-4S] cluster serves as cofactor.

The catalysed reaction is a quinone + NADH + 5 H(+)(in) = a quinol + NAD(+) + 4 H(+)(out). Functionally, NDH-1 shuttles electrons from NADH, via FMN and iron-sulfur (Fe-S) centers, to quinones in the respiratory chain. The immediate electron acceptor for the enzyme in this species is believed to be ubiquinone. Couples the redox reaction to proton translocation (for every two electrons transferred, four hydrogen ions are translocated across the cytoplasmic membrane), and thus conserves the redox energy in a proton gradient. The protein is NADH-quinone oxidoreductase subunit F 1 (nuoF1) of Rhizobium meliloti (strain 1021) (Ensifer meliloti).